Reading from the N-terminus, the 481-residue chain is Sulfate adenylyltransferase subunit 1 (481 aa).

A tr-type G domain is found at K22–D236. The tract at residues G31–S38 is G1. Position 31–38 (G31–S38) interacts with GTP. A G2 region spans residues G89 to D93. Residues D110 to G113 are G3. Residues D110–H114 and N165–D168 contribute to the GTP site. Residues N165–D168 form a G4 region. Residues S202–L204 form a G5 region.

It belongs to the TRAFAC class translation factor GTPase superfamily. Classic translation factor GTPase family. CysN/NodQ subfamily. In terms of assembly, heterodimer composed of CysD, the smaller subunit, and CysN.

It catalyses the reaction sulfate + ATP + H(+) = adenosine 5'-phosphosulfate + diphosphate. It functions in the pathway sulfur metabolism; hydrogen sulfide biosynthesis; sulfite from sulfate: step 1/3. Functionally, with CysD forms the ATP sulfurylase (ATPS) that catalyzes the adenylation of sulfate producing adenosine 5'-phosphosulfate (APS) and diphosphate, the first enzymatic step in sulfur assimilation pathway. APS synthesis involves the formation of a high-energy phosphoric-sulfuric acid anhydride bond driven by GTP hydrolysis by CysN coupled to ATP hydrolysis by CysD. The polypeptide is Sulfate adenylyltransferase subunit 1 (Laribacter hongkongensis (strain HLHK9)).